The chain runs to 493 residues: Malonyl-CoA decarboxylase, mitochondrial (493 aa).

The transit peptide at 1–39 (MRGFGPGLTARRLLPLRLPPRPPGPRLASGQAAGALERA) directs the protein to the mitochondrion. The tract at residues 40–190 (MDELLRRAVP…VLKGMLSEWF (151 aa)) is alpha-helical domain. Lys59 is modified (N6-acetyllysine). Residue Lys168 is modified to N6-acetyllysine; alternate. The residue at position 168 (Lys168) is an N6-succinyllysine; alternate. Positions 191 to 493 (SSGFLNLERV…VAQFQKNSKL (303 aa)) are catalytic domain. An N6-acetyllysine modification is found at Lys211. At Lys222 the chain carries N6-succinyllysine. Malonyl-CoA-binding positions include 299 to 305 (QGVELGT) and Ser329. Catalysis depends on Ser329, which acts as the Proton acceptor. Lys389 is modified (N6-acetyllysine). His423 is a malonyl-CoA binding site. The active-site Proton donor is the His423. Lys472 is modified (N6-acetyllysine). The Microbody targeting signal signature appears at 491–493 (SKL).

As to quaternary structure, homotetramer. Dimer of dimers. The two subunits within a dimer display conformational differences suggesting that at any given moment, only one of the two subunits is competent for malonyl-CoA binding and catalytic activity. Under oxidizing conditions, can form disulfide-linked homotetramers (in vitro). Associates with the peroxisomal targeting signal receptor PEX5. In terms of processing, acetylation at Lys-472 activates malonyl-CoA decarboxylase activity. Deacetylation at Lys-472 by SIRT4 represses activity, leading to promote lipogenesis. Interchain disulfide bonds may form in peroxisomes (Potential). Interchain disulfide bonds are not expected to form in the reducing environment of the cytoplasm and mitochondria. Expressed in fibroblasts and hepatoblastoma cells (at protein level). Expressed strongly in heart, liver, skeletal muscle, kidney and pancreas. Expressed in myotubes. Expressed weakly in brain, placenta, spleen, thymus, testis, ovary and small intestine.

Its subcellular location is the cytoplasm. It localises to the mitochondrion matrix. The protein localises to the peroxisome. It is found in the peroxisome matrix. It carries out the reaction malonyl-CoA + H(+) = acetyl-CoA + CO2. It functions in the pathway metabolic intermediate biosynthesis; acetyl-CoA biosynthesis; acetyl-CoA from malonyl-CoA: step 1/1. Its activity is regulated as follows. Malonyl-CoA decarboxylase activity does not require any cofactors or divalent metal ions. Formation of interchain disulfide bonds leads to positive cooperativity between active sites and increases the affinity for malonyl-CoA and the catalytic efficiency (in vitro). In terms of biological role, catalyzes the conversion of malonyl-CoA to acetyl-CoA. In the fatty acid biosynthesis MCD selectively removes malonyl-CoA and thus assures that methyl-malonyl-CoA is the only chain elongating substrate for fatty acid synthase and that fatty acids with multiple methyl side chains are produced. In peroxisomes it may be involved in degrading intraperoxisomal malonyl-CoA, which is generated by the peroxisomal beta-oxidation of odd chain-length dicarboxylic fatty acids. Plays a role in the metabolic balance between glucose and lipid oxidation in muscle independent of alterations in insulin signaling. May play a role in controlling the extent of ischemic injury by promoting glucose oxidation. In Homo sapiens (Human), this protein is Malonyl-CoA decarboxylase, mitochondrial.